Consider the following 186-residue polypeptide: ATP synthase subunit delta (186 aa).

Belongs to the ATPase delta chain family. In terms of assembly, F-type ATPases have 2 components, F(1) - the catalytic core - and F(0) - the membrane proton channel. F(1) has five subunits: alpha(3), beta(3), gamma(1), delta(1), epsilon(1). CF(0) has four main subunits: a(1), b(1), b'(1) and c(10-14). The alpha and beta chains form an alternating ring which encloses part of the gamma chain. F(1) is attached to F(0) by a central stalk formed by the gamma and epsilon chains, while a peripheral stalk is formed by the delta, b and b' chains.

It is found in the cell inner membrane. Its function is as follows. F(1)F(0) ATP synthase produces ATP from ADP in the presence of a proton or sodium gradient. F-type ATPases consist of two structural domains, F(1) containing the extramembraneous catalytic core and F(0) containing the membrane proton channel, linked together by a central stalk and a peripheral stalk. During catalysis, ATP synthesis in the catalytic domain of F(1) is coupled via a rotary mechanism of the central stalk subunits to proton translocation. In terms of biological role, this protein is part of the stalk that links CF(0) to CF(1). It either transmits conformational changes from CF(0) to CF(1) or is implicated in proton conduction. This Jannaschia sp. (strain CCS1) protein is ATP synthase subunit delta.